Here is a 177-residue protein sequence, read N- to C-terminus: Large ribosomal subunit protein uL10 (177 aa).

This sequence belongs to the universal ribosomal protein uL10 family. As to quaternary structure, part of the ribosomal stalk of the 50S ribosomal subunit. The N-terminus interacts with L11 and the large rRNA to form the base of the stalk. The C-terminus forms an elongated spine to which L12 dimers bind in a sequential fashion forming a multimeric L10(L12)X complex.

In terms of biological role, forms part of the ribosomal stalk, playing a central role in the interaction of the ribosome with GTP-bound translation factors. The protein is Large ribosomal subunit protein uL10 of Xanthomonas oryzae pv. oryzae (strain MAFF 311018).